The chain runs to 197 residues: HTH-type transcriptional regulator BetI (197 aa).

In terms of domain architecture, HTH tetR-type spans 8–68 (PIRRQQLIEA…ATMRYLMNAL (61 aa)). The H-T-H motif DNA-binding region spans 31–50 (SIALIARLAGVSNGIISHYF).

It participates in amine and polyamine biosynthesis; betaine biosynthesis via choline pathway [regulation]. In terms of biological role, repressor involved in the biosynthesis of the osmoprotectant glycine betaine. It represses transcription of the choline transporter BetT and the genes of BetAB involved in the synthesis of glycine betaine. The polypeptide is HTH-type transcriptional regulator BetI (Pseudomonas fluorescens (strain SBW25)).